Here is a 217-residue protein sequence, read N- to C-terminus: 8-oxoguanine DNA glycosylase/AP lyase (217 aa).

Residues Lys-138 and Asp-157 contribute to the active site.

The protein belongs to the type-2 OGG1 family.

The catalysed reaction is 2'-deoxyribonucleotide-(2'-deoxyribose 5'-phosphate)-2'-deoxyribonucleotide-DNA = a 3'-end 2'-deoxyribonucleotide-(2,3-dehydro-2,3-deoxyribose 5'-phosphate)-DNA + a 5'-end 5'-phospho-2'-deoxyribonucleoside-DNA + H(+). In terms of biological role, catalyzes the excision of an oxidatively damaged form of guanine (7,8-dihydro-8-oxoguanine = 8-oxoG) from DNA. Also cleaves the DNA backbone at apurinic/apyrimidinic sites (AP sites). The protein is 8-oxoguanine DNA glycosylase/AP lyase of Fusobacterium nucleatum subsp. nucleatum (strain ATCC 25586 / DSM 15643 / BCRC 10681 / CIP 101130 / JCM 8532 / KCTC 2640 / LMG 13131 / VPI 4355).